The primary structure comprises 155 residues: V-type proton ATPase 16 kDa proteolipid subunit c (155 aa).

At 1–10 (MSEAKNGPEY) the chain is on the lumenal side. A helical transmembrane segment spans residues 11–33 (ASFFAVMGASAAMVFSALGAAYG). At 34 to 55 (TAKSGTGIAAMSVMRPEMIMKS) the chain is on the cytoplasmic side. The chain crosses the membrane as a helical span at residues 56-76 (IIPVVMAGIIAIYGLVVAVLI). Topologically, residues 77–92 (ANSLNDGISLYRSFLQ) are lumenal. A helical transmembrane segment spans residues 93–114 (LGAGLSVGLSGLAAGFAIGIVG). Residues 115-131 (DAGVRGTAQQPRLFVGM) are Cytoplasmic-facing. The helical transmembrane segment at 132–152 (ILILIFAEVLGLYGLIVALIL) threads the bilayer. Topologically, residues 153-155 (STK) are lumenal.

The protein belongs to the V-ATPase proteolipid subunit family. V-ATPase is a heteromultimeric enzyme made up of two complexes: the ATP-hydrolytic V1 complex and the proton translocation V0 complex. The V1 complex consists of three catalytic AB heterodimers that form a heterohexamer, three peripheral stalks each consisting of EG heterodimers, one central rotor including subunits D and F, and the regulatory subunits C and H. The proton translocation complex V0 consists of the proton transport subunit a, a ring of proteolipid subunits c9c'', rotary subunit d, subunits e and f, and the accessory subunits ATP6AP1/Ac45 and ATP6AP2/PRR. Interacts with the V0 complex V-ATPase subunit a4 ATP6V0A4. Interacts with LASS2. Interacts with RNF182; this interaction leads to ubiquitination and degradation via the proteasome pathway. In terms of processing, ubiquitinated by RNF182, leading to its degradation via the ubiquitin-proteasome pathway. As to expression, expressed in brain (at protein level).

The protein resides in the cytoplasmic vesicle. It localises to the clathrin-coated vesicle membrane. Its subcellular location is the secretory vesicle. It is found in the synaptic vesicle membrane. Proton-conducting pore forming subunit of the V0 complex of vacuolar(H+)-ATPase (V-ATPase), a multisubunit enzyme composed of a peripheral complex (V1) that hydrolyzes ATP and a membrane integral complex (V0) that translocates protons. V-ATPase is responsible for acidifying and maintaining the pH of intracellular compartments and in some cell types, is targeted to the plasma membrane, where it is responsible for acidifying the extracellular environment. This Bos taurus (Bovine) protein is V-type proton ATPase 16 kDa proteolipid subunit c (ATP6V0C).